Here is a 500-residue protein sequence, read N- to C-terminus: Cysteine--tRNA ligase (500 aa).

Residue cysteine 29 participates in Zn(2+) binding. The 'HIGH' region signature appears at 31–41; sequence VTVYDLCHLGH. Zn(2+)-binding residues include cysteine 213, histidine 238, and glutamate 242. A 'KMSKS' region motif is present at residues 270-274; the sequence is KMSKS. Lysine 273 is an ATP binding site.

This sequence belongs to the class-I aminoacyl-tRNA synthetase family. As to quaternary structure, monomer. Requires Zn(2+) as cofactor.

The protein resides in the cytoplasm. The enzyme catalyses tRNA(Cys) + L-cysteine + ATP = L-cysteinyl-tRNA(Cys) + AMP + diphosphate. The polypeptide is Cysteine--tRNA ligase (Prochlorococcus marinus (strain NATL1A)).